Here is a 299-residue protein sequence, read N- to C-terminus: MTENEMTSNDSTEPTPTTETAASSPDPSGDPLIEQSIDVEGTDSTAAETGKPVIESSDLNVFYGETQALQSIDLAIPEKQVTAMIGPSGCGKSTFLRCINRMNDLIDAARVEGDLHFEGKNVYDADVDPVALRRRIGMVFQHPNPFPKSIYDNVAYGLRIQDQTENIDEKVETALKRAALWDEVKDQLDKSALDLSGGQQQRLCIARAIAVDPDVILMDEPASALDPIATSKIEDLIEELAEEFTVVIVTHNMQQAARISDKTAVFLTGGELVEFDDTDKIFENPESQRVEDYITGKFG.

Positions 1–51 (MTENEMTSNDSTEPTPTTETAASSPDPSGDPLIEQSIDVEGTDSTAAETGK) are disordered. The span at 10–27 (DSTEPTPTTETAASSPDP) shows a compositional bias: low complexity. The 241-residue stretch at 54–294 (IESSDLNVFY…PESQRVEDYI (241 aa)) folds into the ABC transporter domain. 86–93 (GPSGCGKS) contacts ATP.

Belongs to the ABC transporter superfamily. Phosphate importer (TC 3.A.1.7) family. The complex is composed of two ATP-binding proteins (PstB), two transmembrane proteins (PstC and PstA) and a solute-binding protein (PstS).

The protein resides in the cell membrane. It carries out the reaction phosphate(out) + ATP + H2O = ADP + 2 phosphate(in) + H(+). Part of the ABC transporter complex PstSACB involved in phosphate import. Responsible for energy coupling to the transport system. The sequence is that of Phosphate import ATP-binding protein PstB 1 from Haloarcula marismortui (strain ATCC 43049 / DSM 3752 / JCM 8966 / VKM B-1809) (Halobacterium marismortui).